We begin with the raw amino-acid sequence, 428 residues long: C4-dicarboxylate transport protein (428 aa).

9 helical membrane-spanning segments follow: residues 8-28 (SLYVQVLTAIAIGILLGHFYP), 44-64 (LIKMVIAPVIFCTVVTGIAGM), 76-96 (VALLYFEVVSTIALIIGLIIV), 142-162 (IGAFASGNILQVLLFAVLFGF), 184-204 (VIFGIINMIMRLAPIGAFGAM), 222-242 (LIICFYITCILFVVVVLGSIA), 289-309 (VVGLVIPTGYSFNLDGTSIYL), 326-346 (IFHQITLLVVLLLSSKGAAGV), and 352-372 (IVLAATISAVGHLPVAGLALI).

Belongs to the dicarboxylate/amino acid:cation symporter (DAACS) (TC 2.A.23) family.

The protein localises to the cell inner membrane. Its function is as follows. Responsible for the transport of dicarboxylates such as succinate, fumarate, and malate from the periplasm across the membrane. This Klebsiella pneumoniae subsp. pneumoniae (strain ATCC 700721 / MGH 78578) protein is C4-dicarboxylate transport protein.